The following is a 1264-amino-acid chain: P-type sodium-transporting ATPase4 (1264 aa).

Over residues 1–12 (MSSQNNNKQGGQ) the composition is skewed to polar residues. The interval 1 to 102 (MSSQNNNKQG…INGEKNDDNN (102 aa)) is disordered. Composition is skewed to basic and acidic residues over residues 15–42 (NNKK…DELN) and 50–64 (NDMK…KKNE). Transmembrane regions (helical) follow at residues 165 to 185 (VWLI…LVAA), 186 to 206 (VASL…IVTL), 359 to 379 (GLIG…AVII), 393 to 413 (FVII…GLPM), 923 to 943 (FVCF…VAIV), 1006 to 1026 (IFEA…CTGF), 1203 to 1223 (CSIS…TSIL), and 1226 to 1246 (TCLL…NLFL).

This sequence belongs to the cation transport ATPase (P-type) (TC 3.A.3) family.

It is found in the cell membrane. It carries out the reaction Na(+)(in) + ATP + H2O = Na(+)(out) + ADP + phosphate + H(+). Inhibited by cipargamin and other spiroindolone compounds. Inhibited by 4-cyano-3-methylisoquinoline derivatives MB14 and MB10 but not RK18. Inhibited by (+)-SJ733, a dihydroisoquinolone compound. Functionally, sodium-exporting ATPase. Required for the extrusion of Na(+) from the intraerythrocytic parasites to maintain a low cytosolic concentration of Na(+). In Plasmodium falciparum (isolate 3D7), this protein is P-type sodium-transporting ATPase4.